Consider the following 368-residue polypeptide: E3 ubiquitin-protein ligase ATL31 (368 aa).

A signal peptide spans 1–23 (MDPIKHISLPVLVLFLLLSVSAG). Residues 46–66 (AVVVVVVIAALFFMGFFTVYI) form a helical membrane-spanning segment. The segment at 124–166 (CAICLNEFEDDETLRLLPKCDHVFHPHCIGAWLQGHVTCPVCR) adopts an RING-type; atypical zinc-finger fold. At serine 247 the chain carries Phosphoserine. The disordered stretch occupies residues 342–368 (NKDGEGTSSVQHIGTVGSTSGSLRLPV). Polar residues predominate over residues 347 to 368 (GTSSVQHIGTVGSTSGSLRLPV).

It belongs to the RING-type zinc finger family. ATL subfamily.

The protein resides in the membrane. The catalysed reaction is S-ubiquitinyl-[E2 ubiquitin-conjugating enzyme]-L-cysteine + [acceptor protein]-L-lysine = [E2 ubiquitin-conjugating enzyme]-L-cysteine + N(6)-ubiquitinyl-[acceptor protein]-L-lysine.. It functions in the pathway protein modification; protein ubiquitination. Functionally, E3 ubiquitin-protein ligase that is required for the plant C/N response during seedling growth transition. May be involved in the early steps of the plant defense signaling pathway. The protein is E3 ubiquitin-protein ligase ATL31 (ATL31) of Arabidopsis thaliana (Mouse-ear cress).